Reading from the N-terminus, the 592-residue chain is Aspartate--tRNA(Asp/Asn) ligase (592 aa).

Glu-176 is an L-aspartate binding site. The segment at 200 to 203 is aspartate; the sequence is QLYK. Arg-222 lines the L-aspartate pocket. ATP-binding positions include 222–224 and Gln-231; that span reads RDE. His-452 is a binding site for L-aspartate. Glu-486 contacts ATP. Position 493 (Arg-493) interacts with L-aspartate. ATP is bound at residue 538–541; sequence GVDR.

It belongs to the class-II aminoacyl-tRNA synthetase family. Type 1 subfamily. In terms of assembly, homodimer.

It is found in the cytoplasm. It carries out the reaction tRNA(Asx) + L-aspartate + ATP = L-aspartyl-tRNA(Asx) + AMP + diphosphate. Aspartyl-tRNA synthetase with relaxed tRNA specificity since it is able to aspartylate not only its cognate tRNA(Asp) but also tRNA(Asn). Reaction proceeds in two steps: L-aspartate is first activated by ATP to form Asp-AMP and then transferred to the acceptor end of tRNA(Asp/Asn). The polypeptide is Aspartate--tRNA(Asp/Asn) ligase (Rhodopirellula baltica (strain DSM 10527 / NCIMB 13988 / SH1)).